The chain runs to 228 residues: DNA-3-methyladenine glycosylase 1 (228 aa).

The active-site Proton acceptor is the D170.

It belongs to the alkylbase DNA glycosidase AlkA family.

The enzyme catalyses Hydrolysis of alkylated DNA, releasing 3-methyladenine, 3-methylguanine, 7-methylguanine and 7-methyladenine.. In terms of biological role, hydrolysis of the deoxyribose N-glycosidic bond to excise 3-methyladenine or 7-methyladenine from the damaged DNA polymer formed by alkylation lesions. Can release ethylated and propylated bases from DNA in addition to 3-methyladenine. The polypeptide is DNA-3-methyladenine glycosylase 1 (mag1) (Schizosaccharomyces pombe (strain 972 / ATCC 24843) (Fission yeast)).